The sequence spans 269 residues: 4-hydroxy-tetrahydrodipicolinate reductase (269 aa).

Residues 9–14 (GCAGKM), aspartate 35, 102–104 (GTT), and 128–131 (APNF) each bind NAD(+). Residue histidine 158 is the Proton donor/acceptor of the active site. Histidine 159 serves as a coordination point for (S)-2,3,4,5-tetrahydrodipicolinate. Lysine 162 acts as the Proton donor in catalysis. A (S)-2,3,4,5-tetrahydrodipicolinate-binding site is contributed by 168 to 169 (GT).

This sequence belongs to the DapB family.

The protein localises to the cytoplasm. The enzyme catalyses (S)-2,3,4,5-tetrahydrodipicolinate + NAD(+) + H2O = (2S,4S)-4-hydroxy-2,3,4,5-tetrahydrodipicolinate + NADH + H(+). It catalyses the reaction (S)-2,3,4,5-tetrahydrodipicolinate + NADP(+) + H2O = (2S,4S)-4-hydroxy-2,3,4,5-tetrahydrodipicolinate + NADPH + H(+). Its pathway is amino-acid biosynthesis; L-lysine biosynthesis via DAP pathway; (S)-tetrahydrodipicolinate from L-aspartate: step 4/4. In terms of biological role, catalyzes the conversion of 4-hydroxy-tetrahydrodipicolinate (HTPA) to tetrahydrodipicolinate. The chain is 4-hydroxy-tetrahydrodipicolinate reductase from Gloeobacter violaceus (strain ATCC 29082 / PCC 7421).